The primary structure comprises 549 residues: Cytoplasmic trehalase (549 aa).

Substrate-binding positions include R168, W175 to D176, N212, R221 to Q223, R292 to E294, and G324. Residues D326 and E509 each act as proton donor/acceptor in the active site. E525 provides a ligand contact to substrate.

Belongs to the glycosyl hydrolase 37 family. As to quaternary structure, monomer.

Its subcellular location is the cytoplasm. It carries out the reaction alpha,alpha-trehalose + H2O = alpha-D-glucose + beta-D-glucose. It functions in the pathway glycan degradation; trehalose degradation; D-glucose from alpha,alpha-trehalose: step 1/1. Hydrolyzes trehalose to glucose. Could be involved, in cells returning to low osmolarity conditions, in the utilization of the accumulated cytoplasmic trehalose, which was synthesized in response to high osmolarity. This chain is Cytoplasmic trehalase, found in Escherichia coli O139:H28 (strain E24377A / ETEC).